We begin with the raw amino-acid sequence, 135 residues long: MAGSARSAMAAKALQTILNIGLLVLATILVIFLVKETFHLAKVLLISNEKDSSYQLIEGIVIYFLYFEFIALIVKYFQSGYHFPLRYFIYIGITAIIRLIIVDHKSPSDTLMYSAAILLLVVTLYLANSNRLKRE.

A run of 4 helical transmembrane segments spans residues Leu-14–Val-34, Tyr-54–Val-74, His-82–Val-102, and Pro-107–Ala-127.

Belongs to the PsiE family.

It localises to the cell inner membrane. The polypeptide is Protein PsiE homolog (Pectobacterium carotovorum subsp. carotovorum (strain PC1)).